The chain runs to 296 residues: Phosphoribosylaminoimidazole-succinocarboxamide synthase (296 aa).

Belongs to the SAICAR synthetase family.

The enzyme catalyses 5-amino-1-(5-phospho-D-ribosyl)imidazole-4-carboxylate + L-aspartate + ATP = (2S)-2-[5-amino-1-(5-phospho-beta-D-ribosyl)imidazole-4-carboxamido]succinate + ADP + phosphate + 2 H(+). The protein operates within purine metabolism; IMP biosynthesis via de novo pathway; 5-amino-1-(5-phospho-D-ribosyl)imidazole-4-carboxamide from 5-amino-1-(5-phospho-D-ribosyl)imidazole-4-carboxylate: step 1/2. This chain is Phosphoribosylaminoimidazole-succinocarboxamide synthase, found in Syntrophotalea carbinolica (strain DSM 2380 / NBRC 103641 / GraBd1) (Pelobacter carbinolicus).